A 177-amino-acid chain; its full sequence is ATP synthase subunit delta (177 aa).

This sequence belongs to the ATPase delta chain family. F-type ATPases have 2 components, F(1) - the catalytic core - and F(0) - the membrane proton channel. F(1) has five subunits: alpha(3), beta(3), gamma(1), delta(1), epsilon(1). F(0) has three main subunits: a(1), b(2) and c(10-14). The alpha and beta chains form an alternating ring which encloses part of the gamma chain. F(1) is attached to F(0) by a central stalk formed by the gamma and epsilon chains, while a peripheral stalk is formed by the delta and b chains.

It is found in the cell inner membrane. F(1)F(0) ATP synthase produces ATP from ADP in the presence of a proton or sodium gradient. F-type ATPases consist of two structural domains, F(1) containing the extramembraneous catalytic core and F(0) containing the membrane proton channel, linked together by a central stalk and a peripheral stalk. During catalysis, ATP synthesis in the catalytic domain of F(1) is coupled via a rotary mechanism of the central stalk subunits to proton translocation. Functionally, this protein is part of the stalk that links CF(0) to CF(1). It either transmits conformational changes from CF(0) to CF(1) or is implicated in proton conduction. This chain is ATP synthase subunit delta, found in Salmonella agona (strain SL483).